Reading from the N-terminus, the 510-residue chain is GMP synthase [glutamine-hydrolyzing] (510 aa).

The Glutamine amidotransferase type-1 domain occupies Asp-5–Thr-194. Cys-82 (nucleophile) is an active-site residue. Catalysis depends on residues His-169 and Glu-171. In terms of domain architecture, GMPS ATP-PPase spans Trp-195–Arg-385. Ser-222–Ser-228 serves as a coordination point for ATP.

As to quaternary structure, homodimer.

The enzyme catalyses XMP + L-glutamine + ATP + H2O = GMP + L-glutamate + AMP + diphosphate + 2 H(+). Its pathway is purine metabolism; GMP biosynthesis; GMP from XMP (L-Gln route): step 1/1. Functionally, catalyzes the synthesis of GMP from XMP. The protein is GMP synthase [glutamine-hydrolyzing] of Campylobacter fetus subsp. fetus (strain 82-40).